Here is a 345-residue protein sequence, read N- to C-terminus: NADH-quinone oxidoreductase subunit H (345 aa).

Helical transmembrane passes span 13–33 (VIILAQTLAVVAFVMISLLFL), 84–104 (FILAPLTSFVLAMIAWAVIPF), 115–135 (VAILYVFAVSSLEVYGVIMGG), 161–181 (IGLIIIGVILSTGSMNFGDIV), 190–210 (LFNWYWLPHFPMVFLFFISCL), 248–268 (YIAIFLMCALTSLLFFGGWLS), 277–297 (PLWMVAKMAFFFFLFAMVKAI), and 309–329 (LGWKVFLPFSLIWVVFVAFAA).

Belongs to the complex I subunit 1 family. As to quaternary structure, NDH-1 is composed of 14 different subunits. Subunits NuoA, H, J, K, L, M, N constitute the membrane sector of the complex.

It localises to the cell inner membrane. It carries out the reaction a quinone + NADH + 5 H(+)(in) = a quinol + NAD(+) + 4 H(+)(out). In terms of biological role, NDH-1 shuttles electrons from NADH, via FMN and iron-sulfur (Fe-S) centers, to quinones in the respiratory chain. The immediate electron acceptor for the enzyme in this species is believed to be ubiquinone. Couples the redox reaction to proton translocation (for every two electrons transferred, four hydrogen ions are translocated across the cytoplasmic membrane), and thus conserves the redox energy in a proton gradient. This subunit may bind ubiquinone. This chain is NADH-quinone oxidoreductase subunit H, found in Ruegeria sp. (strain TM1040) (Silicibacter sp.).